Reading from the N-terminus, the 92-residue chain is DNA/RNA-binding protein Alba (92 aa).

N6-acetyllysine is present on Lys11.

This sequence belongs to the histone-like Alba family. In terms of processing, acetylated. Acetylation at Lys-11 decreases DNA-binding affinity.

It localises to the cytoplasm. It is found in the chromosome. In terms of biological role, binds double-stranded DNA tightly but without sequence specificity. Involved in DNA compaction. This chain is DNA/RNA-binding protein Alba, found in Pyrobaculum calidifontis (strain DSM 21063 / JCM 11548 / VA1).